Consider the following 388-residue polypeptide: Mannitol-1-phosphate 5-dehydrogenase (388 aa).

5–16 contributes to the NAD(+) binding site; it reads AVHFGGGNIGRG. The active site involves Lys213.

It belongs to the mannitol dehydrogenase family. As to quaternary structure, monomer.

The enzyme catalyses D-mannitol 1-phosphate + NAD(+) = beta-D-fructose 6-phosphate + NADH + H(+). In terms of biological role, catalyzes the NAD(H)-dependent interconversion of D-fructose 6-phosphate and D-mannitol 1-phosphate in the mannitol metabolic pathway. In Coccidioides immitis (strain RS) (Valley fever fungus), this protein is Mannitol-1-phosphate 5-dehydrogenase.